The chain runs to 227 residues: Deoxyribose-phosphate aldolase (227 aa).

The Proton donor/acceptor role is filled by Asp-98. Lys-161 functions as the Schiff-base intermediate with acetaldehyde in the catalytic mechanism. Lys-191 (proton donor/acceptor) is an active-site residue.

Belongs to the DeoC/FbaB aldolase family. DeoC type 1 subfamily.

It localises to the cytoplasm. It catalyses the reaction 2-deoxy-D-ribose 5-phosphate = D-glyceraldehyde 3-phosphate + acetaldehyde. It participates in carbohydrate degradation; 2-deoxy-D-ribose 1-phosphate degradation; D-glyceraldehyde 3-phosphate and acetaldehyde from 2-deoxy-alpha-D-ribose 1-phosphate: step 2/2. In terms of biological role, catalyzes a reversible aldol reaction between acetaldehyde and D-glyceraldehyde 3-phosphate to generate 2-deoxy-D-ribose 5-phosphate. The sequence is that of Deoxyribose-phosphate aldolase from Frankia alni (strain DSM 45986 / CECT 9034 / ACN14a).